A 1486-amino-acid chain; its full sequence is Rap guanine nucleotide exchange factor 2 (1486 aa).

Disordered stretches follow at residues 40–59 (HVSS…SSSL) and 68–101 (SEAG…SDPL). A compositionally biased stretch (acidic residues) spans 83 to 94 (VDSEDDDDEEDI). 135–252 (AFANMTMSVR…QKVEEEGEIV (118 aa)) is an a nucleoside 3',5'-cyclic phosphate binding site. The 114-residue stretch at 267–380 (KGHIVIKGTS…RLLNIACAAK (114 aa)) folds into the N-terminal Ras-GEF domain. One can recognise a PDZ domain in the interval 385–468 (LMTLTKPARE…LSITVKTNLF (84 aa)). Ser-501 carries the post-translational modification Phosphoserine. A Ras-associating domain is found at 606–692 (PDQVLRVFKA…GRYYLKNNME (87 aa)). Thr-644 carries the phosphothreonine modification. The Ras-GEF domain maps to 717-944 (STVEVATQLS…SQGSTNATVL (228 aa)). Phosphoserine is present on residues Ser-806, Ser-930, Ser-933, and Ser-1022. The disordered stretch occupies residues 1002–1049 (PATNTLPKNPTDKKPVKSETSPVAPRAGLQPKAQPQPQPPQPPHKLNQ). A compositionally biased stretch (pro residues) spans 1035–1044 (QPQPQPPQPP). Ser-1077, Ser-1086, Ser-1092, Ser-1113, Ser-1117, Ser-1156, and Ser-1173 each carry phosphoserine. 4 disordered regions span residues 1090-1176 (EGSL…SVSI), 1221-1254 (PSTE…SGSH), 1303-1357 (KYSR…DSSS), and 1391-1486 (GRYR…VSAV). Composition is skewed to low complexity over residues 1105–1122 (SNTS…QSSP) and 1138–1159 (SDSG…SFDS). Composition is skewed to polar residues over residues 1244-1254 (GSWTSCSSGSH) and 1304-1328 (YSRQ…SSTG). Residues 1475-1486 (AEEDEDEQVSAV) are compositionally biased toward acidic residues.

This sequence belongs to the RAPGEF2 family. In terms of assembly, found in a complex, at least composed of KIDINS220, MAGI2, NTRK1 and RAPGEF2; the complex is mainly formed at late endosomes in a neuronal growth factor (NGF)-dependent manner. Interacts (via C-terminal domain) with NEDD4 (via WW domains); this interaction leads to ubiquitination and degradation via the proteasome pathway in a cAMP-independent manner. Interacts with MAGI1 (via PDZ domain). Interacts with ADRB1 (via C-terminal PDZ motif); the interaction is direct. Interacts (via Ras-associating domain) with RAP1A (via GTP-bound active form). Interacts weakly with HRAS (via GDP- and GTP-bound forms). Interacts (via C-terminal domain) with MAGI2 (via PDZ and WW domains). Interacts with CDH1 and TJP1. Interacts with CTNNB1. In terms of processing, ubiquitinated by NEDD4, leading to proteasomal degradation. Phosphorylation by PLK2 promotes its activity.

The protein localises to the cytoplasm. It is found in the perinuclear region. It localises to the cell membrane. Its subcellular location is the late endosome. The protein resides in the cell junction. Its function is as follows. Functions as a guanine nucleotide exchange factor (GEF), which activates Rap and Ras family of small GTPases by exchanging bound GDP for free GTP in a cAMP-dependent manner. Serves as a link between cell surface receptors and Rap/Ras GTPases in intracellular signaling cascades. Also acts as an effector for Rap1 by direct association with Rap1-GTP thereby leading to the amplification of Rap1-mediated signaling. Shows weak activity on HRAS. It is controversial whether RAPGEF2 binds cAMP and cGMP or not. Its binding to ligand-activated beta-1 adrenergic receptor ADRB1 leads to the Ras activation through the G(s)-alpha signaling pathway. Involved in the cAMP-induced Ras and Erk1/2 signaling pathway that leads to sustained inhibition of long term melanogenesis by reducing dendrite extension and melanin synthesis. Also provides inhibitory signals for cell proliferation of melanoma cells and promotes their apoptosis in a cAMP-independent nanner. Regulates cAMP-induced neuritogenesis by mediating the Rap1/B-Raf/ERK signaling through a pathway that is independent on both PKA and RAPGEF3/RAPGEF4. Involved in neuron migration and in the formation of the major forebrain fiber connections forming the corpus callosum, the anterior commissure and the hippocampal commissure during brain development. Involved in neuronal growth factor (NGF)-induced sustained activation of Rap1 at late endosomes and in brain-derived neurotrophic factor (BDNF)-induced axon outgrowth of hippocampal neurons. Plays a role in the regulation of embryonic blood vessel formation and in the establishment of basal junction integrity and endothelial barrier function. May be involved in the regulation of the vascular endothelial growth factor receptor KDR and cadherin CDH5 expression at allantois endothelial cell-cell junctions. Binds to cAMP. The sequence is that of Rap guanine nucleotide exchange factor 2 (RAPGEF2) from Bos taurus (Bovine).